A 168-amino-acid polypeptide reads, in one-letter code: CS3 fimbrial subunit A (168 aa).

The first 22 residues, 1-22 (MLKIKYLLIGLSLSAMSSYSLA), serve as a signal peptide directing secretion.

Post-translationally, a longer minor form, starting at amino acid 15, has been detected by amino acid sequencing. This is probably due to alternative processing of the signal peptide.

The protein localises to the fimbrium. Its function is as follows. Fimbriae (also called pili), polar filaments radiating from the surface of the bacterium to a length of 0.5-1.5 micrometers and numbering 100-300 per cell, enable bacteria to colonize the epithelium of specific host organs. The polypeptide is CS3 fimbrial subunit A (Escherichia coli).